The primary structure comprises 401 residues: ATP phosphoribosyltransferase regulatory subunit (401 aa).

Belongs to the class-II aminoacyl-tRNA synthetase family. HisZ subfamily. Heteromultimer composed of HisG and HisZ subunits.

The protein resides in the cytoplasm. Its pathway is amino-acid biosynthesis; L-histidine biosynthesis; L-histidine from 5-phospho-alpha-D-ribose 1-diphosphate: step 1/9. In terms of biological role, required for the first step of histidine biosynthesis. May allow the feedback regulation of ATP phosphoribosyltransferase activity by histidine. In Cyanothece sp. (strain PCC 7425 / ATCC 29141), this protein is ATP phosphoribosyltransferase regulatory subunit.